Reading from the N-terminus, the 421-residue chain is Imidazolonepropionase (421 aa).

Fe(3+) is bound by residues histidine 81 and histidine 83. Residues histidine 81 and histidine 83 each contribute to the Zn(2+) site. 3 residues coordinate 4-imidazolone-5-propanoate: arginine 90, tyrosine 153, and histidine 186. Residue tyrosine 153 participates in N-formimidoyl-L-glutamate binding. Histidine 251 is a Fe(3+) binding site. Residue histidine 251 participates in Zn(2+) binding. Glutamate 254 serves as a coordination point for 4-imidazolone-5-propanoate. A Fe(3+)-binding site is contributed by aspartate 326. Zn(2+) is bound at residue aspartate 326. The N-formimidoyl-L-glutamate site is built by asparagine 328 and glycine 330. Serine 331 lines the 4-imidazolone-5-propanoate pocket.

The protein belongs to the metallo-dependent hydrolases superfamily. HutI family. The cofactor is Zn(2+). Requires Fe(3+) as cofactor.

It localises to the cytoplasm. The catalysed reaction is 4-imidazolone-5-propanoate + H2O = N-formimidoyl-L-glutamate. It functions in the pathway amino-acid degradation; L-histidine degradation into L-glutamate; N-formimidoyl-L-glutamate from L-histidine: step 3/3. Its function is as follows. Catalyzes the hydrolytic cleavage of the carbon-nitrogen bond in imidazolone-5-propanoate to yield N-formimidoyl-L-glutamate. It is the third step in the universal histidine degradation pathway. This is Imidazolonepropionase from Streptococcus sanguinis (strain SK36).